A 71-amino-acid polypeptide reads, in one-letter code: DNA-directed RNA polymerase subunit omega (71 aa).

The protein belongs to the RNA polymerase subunit omega family. As to quaternary structure, the RNAP catalytic core consists of 2 alpha, 1 beta, 1 beta' and 1 omega subunit. When a sigma factor is associated with the core the holoenzyme is formed, which can initiate transcription.

It catalyses the reaction RNA(n) + a ribonucleoside 5'-triphosphate = RNA(n+1) + diphosphate. Its function is as follows. Promotes RNA polymerase assembly. Latches the N- and C-terminal regions of the beta' subunit thereby facilitating its interaction with the beta and alpha subunits. The chain is DNA-directed RNA polymerase subunit omega from Aromatoleum aromaticum (strain DSM 19018 / LMG 30748 / EbN1) (Azoarcus sp. (strain EbN1)).